The following is a 241-amino-acid chain: Proteasome subunit alpha type-5 (241 aa).

Position 1 is an N-acetylmethionine (M1). S16 is subject to Phosphoserine. A Phosphothreonine modification is found at T55. Phosphoserine is present on residues S56 and S63. S198 is a glycosylation site (O-linked (GlcNAc) serine).

It belongs to the peptidase T1A family. In terms of assembly, the 26S proteasome consists of a 20S proteasome core and two 19S regulatory subunits. The 20S proteasome core is a barrel-shaped complex made of 28 subunits that are arranged in four stacked rings. The two outer rings are each formed by seven alpha subunits, and the two inner rings are formed by seven beta subunits. The proteolytic activity is exerted by three beta-subunits PSMB5, PSMB6 and PSMB7. PSMA5 interacts directly with the PSMG1-PSMG2 heterodimer which promotes 20S proteasome assembly.

It is found in the cytoplasm. The protein resides in the nucleus. Component of the 20S core proteasome complex involved in the proteolytic degradation of most intracellular proteins. This complex plays numerous essential roles within the cell by associating with different regulatory particles. Associated with two 19S regulatory particles, forms the 26S proteasome and thus participates in the ATP-dependent degradation of ubiquitinated proteins. The 26S proteasome plays a key role in the maintenance of protein homeostasis by removing misfolded or damaged proteins that could impair cellular functions, and by removing proteins whose functions are no longer required. Associated with the PA200 or PA28, the 20S proteasome mediates ubiquitin-independent protein degradation. This type of proteolysis is required in several pathways including spermatogenesis (20S-PA200 complex) or generation of a subset of MHC class I-presented antigenic peptides (20S-PA28 complex). The chain is Proteasome subunit alpha type-5 (PSMA5) from Bos taurus (Bovine).